We begin with the raw amino-acid sequence, 62 residues long: UPF0434 protein RSc2531 (62 aa).

The protein belongs to the UPF0434 family.

The chain is UPF0434 protein RSc2531 from Ralstonia nicotianae (strain ATCC BAA-1114 / GMI1000) (Ralstonia solanacearum).